The chain runs to 523 residues: Sensory neuron membrane protein 1 (523 aa).

Topologically, residues 1–11 (MQLPRELKYAA) are cytoplasmic. A helical membrane pass occupies residues 12-32 (IAGGVALFGLIFGWVLFPTIL). Residues 33–458 (KSQLKKEMAL…HQLFIPKRVV (426 aa)) lie on the Extracellular side of the membrane. 2 N-linked (GlcNAc...) asparagine glycosylation sites follow: N67 and N229. 3 disulfide bridges follow: C268-C333, C297-C352, and C335-C341. N440 is a glycosylation site (N-linked (GlcNAc...) asparagine). Residues 459 to 479 (GVLRWWMVSFGSLGAVIGIVF) traverse the membrane as a helical segment. Residues 480-523 (HFRDHIMRLAVSGDTKVSKVTPEEEEQKDISVIGQAQEPAKVNI) lie on the Cytoplasmic side of the membrane.

Belongs to the CD36 family.

It is found in the cell membrane. Its function is as follows. Plays an olfactory role that is not restricted to pheromone sensitivity. The protein is Sensory neuron membrane protein 1 of Helicoverpa armigera (Cotton bollworm).